Consider the following 457-residue polypeptide: MQKYISEARLLLALAIPVILAQIAQTAMGFVDTVMAGGYSATDMAAVAIGTSIWLPAILFGHGLLLALTPVIAQLNGSGRRERIAHQVRQGFWLAGFVSVLIMLVLWNAGYIIRSMENIDPALADKAVGYLRALLWGAPGYLFFQVARNQCEGLAKTKPGMVMGFIGLLVNIPVNYIFIYGHFGMPELGGVGCGVATAAVYWVMFLAMVSYIKRARSMRDIRNEKGTAKPDPAVMKRLIQLGLPIALALFFEVTLFAVVALLVSPLGIVDVAGHQIALNFSSLMFVLPMSLAAAVTIRVGYRLGQGSTLDAQTAARTGLMVGVCMATLTAIFTVSLREQIALLYNDNPEVVTLAAHLMLLAAVYQISDSIQVIGSGILRGYKDTRSIFYITFTAYWVLGLPSGYILALTDLVVEPMGPAGFWIGFIIGLTSAAIMMMLRMRYLQRLPSAIILQRASR.

Residues 1 to 10 are Cytoplasmic-facing; that stretch reads MQKYISEARL. The chain crosses the membrane as a helical span at residues 11–31; it reads LLALAIPVILAQIAQTAMGFV. At 32–52 the chain is on the extracellular side; it reads DTVMAGGYSATDMAAVAIGTS. A helical transmembrane segment spans residues 53–73; the sequence is IWLPAILFGHGLLLALTPVIA. Over 74–92 the chain is Cytoplasmic; the sequence is QLNGSGRRERIAHQVRQGF. A helical membrane pass occupies residues 93–113; it reads WLAGFVSVLIMLVLWNAGYII. Topologically, residues 114–126 are extracellular; that stretch reads RSMENIDPALADK. Residues 127–147 form a helical membrane-spanning segment; the sequence is AVGYLRALLWGAPGYLFFQVA. Residues 148-159 are Cytoplasmic-facing; it reads RNQCEGLAKTKP. The helical transmembrane segment at 160–180 threads the bilayer; sequence GMVMGFIGLLVNIPVNYIFIY. Residues 181 to 188 are Extracellular-facing; it reads GHFGMPEL. Residues 189–209 traverse the membrane as a helical segment; sequence GGVGCGVATAAVYWVMFLAMV. At 210 to 242 the chain is on the cytoplasmic side; it reads SYIKRARSMRDIRNEKGTAKPDPAVMKRLIQLG. A helical transmembrane segment spans residues 243–263; the sequence is LPIALALFFEVTLFAVVALLV. At 264 to 275 the chain is on the extracellular side; sequence SPLGIVDVAGHQ. A helical membrane pass occupies residues 276-296; sequence IALNFSSLMFVLPMSLAAAVT. Residues 297–313 are Cytoplasmic-facing; it reads IRVGYRLGQGSTLDAQT. Residues 314-334 form a helical membrane-spanning segment; it reads AARTGLMVGVCMATLTAIFTV. The Extracellular segment spans residues 335–349; the sequence is SLREQIALLYNDNPE. A helical membrane pass occupies residues 350–370; sequence VVTLAAHLMLLAAVYQISDSI. The Cytoplasmic portion of the chain corresponds to 371–386; the sequence is QVIGSGILRGYKDTRS. Residues 387-407 traverse the membrane as a helical segment; that stretch reads IFYITFTAYWVLGLPSGYILA. The Extracellular portion of the chain corresponds to 408–417; sequence LTDLVVEPMG. The helical transmembrane segment at 418 to 438 threads the bilayer; that stretch reads PAGFWIGFIIGLTSAAIMMML. Topologically, residues 439–457 are cytoplasmic; the sequence is RMRYLQRLPSAIILQRASR.

This sequence belongs to the multi antimicrobial extrusion (MATE) (TC 2.A.66.1) family. MdtK subfamily.

It localises to the cell inner membrane. Multidrug efflux pump that functions probably as a Na(+)/drug antiporter. This Escherichia coli O157:H7 protein is Multidrug resistance protein MdtK (mdtK).